A 340-amino-acid polypeptide reads, in one-letter code: Adenosine kinase (340 aa).

The active site involves aspartate 293.

The protein belongs to the carbohydrate kinase PfkB family. Requires Mg(2+) as cofactor.

It carries out the reaction adenosine + ATP = AMP + ADP + H(+). It participates in purine metabolism; AMP biosynthesis via salvage pathway; AMP from adenosine: step 1/1. In terms of biological role, ATP dependent phosphorylation of adenosine and other related nucleoside analogs to monophosphate derivatives. ADO1 does not play a major role in adenine utilization in yeast. Its physiological role could primarily be to recycle adenosine produced by the methyl cycle. The polypeptide is Adenosine kinase (Saccharomyces cerevisiae (strain ATCC 204508 / S288c) (Baker's yeast)).